The chain runs to 181 residues: Protein Syd (181 aa).

The protein belongs to the Syd family.

It is found in the cell inner membrane. Interacts with the SecY protein in vivo. May bind preferentially to an uncomplexed state of SecY, thus functioning either as a chelating agent for excess SecY in the cell or as a regulatory factor that negatively controls the translocase function. This Enterobacter sp. (strain 638) protein is Protein Syd.